The chain runs to 426 residues: Enolase 2 (426 aa).

Residue Gln-163 coordinates (2R)-2-phosphoglycerate. Catalysis depends on Glu-205, which acts as the Proton donor. Mg(2+)-binding residues include Asp-242, Glu-285, and Asp-312. The (2R)-2-phosphoglycerate site is built by Lys-337, Arg-366, Ser-367, and Lys-388. Lys-337 acts as the Proton acceptor in catalysis.

This sequence belongs to the enolase family. It depends on Mg(2+) as a cofactor.

It localises to the cytoplasm. The protein resides in the secreted. Its subcellular location is the cell surface. It carries out the reaction (2R)-2-phosphoglycerate = phosphoenolpyruvate + H2O. The protein operates within carbohydrate degradation; glycolysis; pyruvate from D-glyceraldehyde 3-phosphate: step 4/5. Functionally, catalyzes the reversible conversion of 2-phosphoglycerate (2-PG) into phosphoenolpyruvate (PEP). It is essential for the degradation of carbohydrates via glycolysis. The polypeptide is Enolase 2 (Methanospirillum hungatei JF-1 (strain ATCC 27890 / DSM 864 / NBRC 100397 / JF-1)).